We begin with the raw amino-acid sequence, 259 residues long: MALLQKTRKINAMLQNAAGKPVNFKEMAETLRDVIDSNIFVVSRRGKLLGFSINQQIENDRMKKMLEERQFPEDYTKSLFNIPETSSNLDINSEYTAFPVENRDLFQAGLTTVVPIIGGGERLGTLILSRLQEKFEDDDLILAEYGATVVGMEILREKAEEIEEEARSKAVVQMAISSLSYSELEAIEHIFEELDGNEGLLVASKIADRVGITRSVIVNALRKLESAGVIESRSLGMKGTYIKVLNNKFLMELEKLKSH.

Positions 1-155 (MALLQKTRKI…GATVVGMEIL (155 aa)) are GAF domain. A DNA-binding region (H-T-H motif) is located at residues 203–222 (ASKIADRVGITRSVIVNALR). Ser215 is modified (phosphoserine).

The protein belongs to the CodY family.

The protein localises to the cytoplasm. Its function is as follows. DNA-binding global transcriptional regulator which is involved in the adaptive response to starvation and acts by directly or indirectly controlling the expression of numerous genes in response to nutrient availability. During rapid exponential growth, CodY is highly active and represses genes whose products allow adaptation to nutrient depletion. In Bacillus licheniformis (strain ATCC 14580 / DSM 13 / JCM 2505 / CCUG 7422 / NBRC 12200 / NCIMB 9375 / NCTC 10341 / NRRL NRS-1264 / Gibson 46), this protein is Global transcriptional regulator CodY.